We begin with the raw amino-acid sequence, 635 residues long: ATP-dependent zinc metalloprotease FtsH (635 aa).

Residues 1 to 6 lie on the Cytoplasmic side of the membrane; sequence MNNQGR. Residues 7 to 27 traverse the membrane as a helical segment; the sequence is SILTWAALFVFVILLFNVFQS. Residues 28–103 lie on the Periplasmic side of the membrane; it reads DGLLGGRNNI…VVPLETRMNT (76 aa). A helical transmembrane segment spans residues 104-124; that stretch reads FLGFLISWFPMLLLIGVWVFF. The Cytoplasmic segment spans residues 125–635; that stretch reads MRQMHGGGKA…KKAKKESTNI (511 aa). An ATP-binding site is contributed by 195–202; it reads GPPGTGKT. Histidine 417 provides a ligand contact to Zn(2+). Residue glutamate 418 is part of the active site. Zn(2+)-binding residues include histidine 421 and aspartate 495. A disordered region spans residues 600 to 635; that stretch reads SEEENKFPFNDSPTIKIDKEKSPEKAKKAKKESTNI. The segment covering 615–635 has biased composition (basic and acidic residues); sequence KIDKEKSPEKAKKAKKESTNI.

This sequence in the central section; belongs to the AAA ATPase family. It in the C-terminal section; belongs to the peptidase M41 family. As to quaternary structure, homohexamer. The cofactor is Zn(2+).

The protein localises to the cell inner membrane. Functionally, acts as a processive, ATP-dependent zinc metallopeptidase for both cytoplasmic and membrane proteins. Plays a role in the quality control of integral membrane proteins. This Rickettsia felis (strain ATCC VR-1525 / URRWXCal2) (Rickettsia azadi) protein is ATP-dependent zinc metalloprotease FtsH.